The sequence spans 145 residues: Hemoglobin subunit beta-1 (145 aa).

One can recognise a Globin domain in the interval 1–145; that stretch reads TFTNDESQHI…VEAALATGYH (145 aa). The heme b site is built by His-62 and His-91.

It belongs to the globin family. Major hemoglobin is a tetramer of two alpha-1 chains and two beta-1 chains. In terms of tissue distribution, red blood cells.

Functionally, involved in oxygen transport from the lung to the various peripheral tissues. The polypeptide is Hemoglobin subunit beta-1 (HBB1) (Triturus cristatus (Great crested newt)).